Reading from the N-terminus, the 171-residue chain is Spiderine-2b (171 aa).

Positions 1 to 18 (MKFALVLLGFCAFYLVNA) are cleaved as a signal peptide. Positions 19–58 (TGDLETELEASDLQELQEALDLIAETPLESLEAEELEEAR) are cleaved as a propeptide — removed in mature form. Residues 59-104 (KFKFPKINWGKLASKAKDVYKKGQKLAKNKNVKKALKYGKQLAENL) form a linear cationic cytotoxin domain region. Residues 118 to 171 (NNKCWAIGTRCTDDCDCCPEHHCHCPAKSWTFGLIPCSCQVTESDKVNKCPPAE) form the Oxytoxin-type inhibitor cystine knot (ICK) domain. Cystine bridges form between C121–C135, C128–C140, C132–C167, C134–C156, and C142–C154.

This sequence belongs to the spiderine family. Cationic/spiderine subfamily. As to expression, expressed by the venom gland.

It is found in the secreted. Functionally, has antimicrobial, insecticidal, cytolytic and cytotoxic activity. The polypeptide is Spiderine-2b (Oxyopes takobius (Lynx spider)).